The primary structure comprises 407 residues: Argininosuccinate synthase (407 aa).

Residues 10–18 (AYSGGLDTS) and A37 contribute to the ATP site. L-citrulline contacts are provided by Y88 and S93. Residue G118 participates in ATP binding. Positions 120, 124, and 125 each coordinate L-aspartate. N124 is an L-citrulline binding site. The L-citrulline site is built by R128, S180, S189, E265, and Y277.

It belongs to the argininosuccinate synthase family. Type 1 subfamily. Homotetramer.

The protein resides in the cytoplasm. It carries out the reaction L-citrulline + L-aspartate + ATP = 2-(N(omega)-L-arginino)succinate + AMP + diphosphate + H(+). It participates in amino-acid biosynthesis; L-arginine biosynthesis; L-arginine from L-ornithine and carbamoyl phosphate: step 2/3. This is Argininosuccinate synthase from Alcanivorax borkumensis (strain ATCC 700651 / DSM 11573 / NCIMB 13689 / SK2).